A 293-amino-acid chain; its full sequence is FAS1 domain-containing protein DEHA2G15708g (293 aa).

The N-terminal stretch at methionine 1–serine 18 is a signal peptide. The span at aspartate 76–lysine 87 shows a compositional bias: basic and acidic residues. The disordered stretch occupies residues aspartate 76–arginine 126. Positions glutamine 141–leucine 290 constitute an FAS1 domain.

It localises to the vacuole. This Debaryomyces hansenii (strain ATCC 36239 / CBS 767 / BCRC 21394 / JCM 1990 / NBRC 0083 / IGC 2968) (Yeast) protein is FAS1 domain-containing protein DEHA2G15708g.